The sequence spans 339 residues: MKIVIDLMGADHGVLPIIEGVSRALENKSFGAVLVGDKDKATPFISKELASKVEMIHTQDYIKMEEAATEAIKRKESSIYLGMDILKNGADALISAGHSGATMGLATLRLGRIKGVERPAICTLMPSVGKRPSVLLDAGANTDCKPEYLIDFALMGYEYAKSVLGYDSPKVGLLSNGEEDIKGNMLVKETHKMLKAYDFFYGNVEGSDIFKGLVDVVVCDGFMGNVVLKTTEGVASAIGSIFKDEIKSCLKSKIGALMLKNAFDTLRQKTDYAEYGGAPLLGVNKSVIISHGKSNARAIECAIYQAISTVKSQVCLRITKAFESLKPSASTHQSDQQDA.

It belongs to the PlsX family. In terms of assembly, homodimer. Probably interacts with PlsY.

It is found in the cytoplasm. The enzyme catalyses a fatty acyl-[ACP] + phosphate = an acyl phosphate + holo-[ACP]. It participates in lipid metabolism; phospholipid metabolism. In terms of biological role, catalyzes the reversible formation of acyl-phosphate (acyl-PO(4)) from acyl-[acyl-carrier-protein] (acyl-ACP). This enzyme utilizes acyl-ACP as fatty acyl donor, but not acyl-CoA. The sequence is that of Phosphate acyltransferase from Helicobacter acinonychis (strain Sheeba).